Consider the following 476-residue polypeptide: Ribulose bisphosphate carboxylase large chain (476 aa).

A propeptide spanning residues 1 to 2 (MS) is cleaved from the precursor. P3 carries the post-translational modification N-acetylproline. At K14 the chain carries N6,N6,N6-trimethyllysine. N123 and T173 together coordinate substrate. Residue K175 is the Proton acceptor of the active site. K177 provides a ligand contact to substrate. Mg(2+)-binding residues include K201, D203, and E204. Position 201 is an N6-carboxylysine (K201). The Proton acceptor role is filled by H294. Substrate is bound by residues R295, H327, and S379.

The protein belongs to the RuBisCO large chain family. Type I subfamily. As to quaternary structure, heterohexadecamer of 8 large chains and 8 small chains; disulfide-linked. The disulfide link is formed within the large subunit homodimers. The cofactor is Mg(2+). The disulfide bond which can form in the large chain dimeric partners within the hexadecamer appears to be associated with oxidative stress and protein turnover.

The protein resides in the plastid. The protein localises to the chloroplast. The enzyme catalyses 2 (2R)-3-phosphoglycerate + 2 H(+) = D-ribulose 1,5-bisphosphate + CO2 + H2O. It catalyses the reaction D-ribulose 1,5-bisphosphate + O2 = 2-phosphoglycolate + (2R)-3-phosphoglycerate + 2 H(+). Functionally, ruBisCO catalyzes two reactions: the carboxylation of D-ribulose 1,5-bisphosphate, the primary event in carbon dioxide fixation, as well as the oxidative fragmentation of the pentose substrate in the photorespiration process. Both reactions occur simultaneously and in competition at the same active site. The polypeptide is Ribulose bisphosphate carboxylase large chain (Setaria italica (Foxtail millet)).